A 706-amino-acid chain; its full sequence is Elongation factor G 1 (706 aa).

The region spanning 8-290 (NRYRNIGICA…AVIDYLPAPT (283 aa)) is the tr-type G domain. GTP-binding positions include 17–24 (AHVDAGKT), 88–92 (DTPGH), and 142–145 (NKMD).

It belongs to the TRAFAC class translation factor GTPase superfamily. Classic translation factor GTPase family. EF-G/EF-2 subfamily.

The protein resides in the cytoplasm. Functionally, catalyzes the GTP-dependent ribosomal translocation step during translation elongation. During this step, the ribosome changes from the pre-translocational (PRE) to the post-translocational (POST) state as the newly formed A-site-bound peptidyl-tRNA and P-site-bound deacylated tRNA move to the P and E sites, respectively. Catalyzes the coordinated movement of the two tRNA molecules, the mRNA and conformational changes in the ribosome. The polypeptide is Elongation factor G 1 (Pseudomonas aeruginosa (strain ATCC 15692 / DSM 22644 / CIP 104116 / JCM 14847 / LMG 12228 / 1C / PRS 101 / PAO1)).